The sequence spans 181 residues: CASP-like protein 5A1 (181 aa).

Residues 1–38 (MFASRPVVHPLEVAAPAHPVQQPAPGVLMKDLPGMPGT) are Cytoplasmic-facing. Residues 39–59 (PGGLGLRVLQLLFAAISLAVM) traverse the membrane as a helical segment. Topologically, residues 60 to 77 (SSTADFASVSAFCYLITT) are extracellular. Residues 78 to 98 (TVLQCVWSLTVAIVDIYALLV) traverse the membrane as a helical segment. Residues 99-115 (KRCLQNRRAVTLFSIGD) are Cytoplasmic-facing. A helical transmembrane segment spans residues 116–136 (GITWLVSFSGACAAAGIPVLI). At 137 to 153 (DADLIMCSENPCASFQT) the chain is on the extracellular side. The helical transmembrane segment at 154-174 (AVAMGFMCCFSLLPSFLLNFY) threads the bilayer. Residues 175-181 (SIASSHG) lie on the Cytoplasmic side of the membrane.

This sequence belongs to the Casparian strip membrane proteins (CASP) family. As to quaternary structure, homodimer and heterodimers.

The protein localises to the cell membrane. This Zea mays (Maize) protein is CASP-like protein 5A1.